The following is a 233-amino-acid chain: 2-C-methyl-D-erythritol 4-phosphate cytidylyltransferase (233 aa).

Belongs to the IspD/TarI cytidylyltransferase family. IspD subfamily.

It carries out the reaction 2-C-methyl-D-erythritol 4-phosphate + CTP + H(+) = 4-CDP-2-C-methyl-D-erythritol + diphosphate. The protein operates within isoprenoid biosynthesis; isopentenyl diphosphate biosynthesis via DXP pathway; isopentenyl diphosphate from 1-deoxy-D-xylulose 5-phosphate: step 2/6. In terms of biological role, catalyzes the formation of 4-diphosphocytidyl-2-C-methyl-D-erythritol from CTP and 2-C-methyl-D-erythritol 4-phosphate (MEP). The polypeptide is 2-C-methyl-D-erythritol 4-phosphate cytidylyltransferase (Nitrosomonas eutropha (strain DSM 101675 / C91 / Nm57)).